Here is a 69-residue protein sequence, read N- to C-terminus: Conotoxin SIVA (69 aa).

The N-terminal stretch at 1–21 is a signal peptide; sequence MGMRMMFTVFLLVVLATTVVS. A propeptide spanning residues 22 to 38 is cleaved from the precursor; sequence TPSDRASDGRNAAVHER. Pyrrolidone carboxylic acid is present on glutamine 39. An O-linked (HexNAc...) serine glycan is attached at serine 45. A 4-hydroxyproline mark is found at proline 55, proline 60, and proline 61. Cysteine 68 is subject to Cysteine amide.

This sequence belongs to the conotoxin A superfamily. In terms of processing, contains 3 disulfide bonds. Post-translationally, O-linked glycan consists of Hex3-HexNAc2 pentasaccharide. Expressed by the venom duct.

The protein localises to the secreted. In terms of biological role, neurotoxin with probable activity on sodium channel. Induces intense repetitive firing of the frog neuromuscular junction, leading to a tetanic contracture in muscle fiber (spastic paralysis). In vivo, shows the same effect as the whole venom when injected on fish. Intraperitoneal injection into fish induces a period of rapid swimming followed by a spastic paralysis with stiff fibrillating fins. At high doses, the peptide is lethal to both fish and mice. In Conus striatus (Striated cone), this protein is Conotoxin SIVA.